Consider the following 904-residue polypeptide: Pyrimidine pathway regulatory protein 1 (904 aa).

Basic residues predominate over residues 1-11; it reads MKQKKFNSKKS. The tract at residues 1–27 is disordered; the sequence is MKQKKFNSKKSNRTDLSKRGDSPNIGI. Basic and acidic residues predominate over residues 12-21; that stretch reads NRTDLSKRGD. Zn(2+)-binding residues include Cys34, Cys37, Cys44, Cys51, Cys54, and Cys61. A DNA-binding region (zn(2)-C6 fungal-type) is located at residues 34-61; sequence CKRCRLKKIKCDQEFPSCKRCAKLEVPC. Positions 883-904 are disordered; sequence GNEGESSYDISKGKNSESGGIF.

As to quaternary structure, binds DNA as a homodimer.

The protein localises to the nucleus. Functionally, positive regulator of URA1 and URA3 expression. In Saccharomyces cerevisiae (strain ATCC 204508 / S288c) (Baker's yeast), this protein is Pyrimidine pathway regulatory protein 1 (PPR1).